Reading from the N-terminus, the 149-residue chain is 3-dehydroquinate dehydratase (149 aa).

Tyr-26 (proton acceptor) is an active-site residue. Asn-77, His-83, and Asp-90 together coordinate substrate. Residue His-103 is the Proton donor of the active site. Substrate contacts are provided by residues 104 to 105 and Arg-114; that span reads LS.

It belongs to the type-II 3-dehydroquinase family. As to quaternary structure, homododecamer.

The enzyme catalyses 3-dehydroquinate = 3-dehydroshikimate + H2O. Its pathway is metabolic intermediate biosynthesis; chorismate biosynthesis; chorismate from D-erythrose 4-phosphate and phosphoenolpyruvate: step 3/7. Catalyzes a trans-dehydration via an enolate intermediate. The sequence is that of 3-dehydroquinate dehydratase from Vibrio vulnificus (strain YJ016).